We begin with the raw amino-acid sequence, 55 residues long: Large ribosomal subunit protein bL33 (55 aa).

Belongs to the bacterial ribosomal protein bL33 family.

This is Large ribosomal subunit protein bL33 from Vibrio atlanticus (strain LGP32) (Vibrio splendidus (strain Mel32)).